The chain runs to 272 residues: ATP synthase subunit a (272 aa).

Helical transmembrane passes span 41–61, 102–122, 147–167, 212–232, and 243–263; these read TLNIDSMFFSVVLGLIFLALF, IAPLALTIFVWVFLMNLMDLV, DVNITLSMALGVFILILFYSI, LFGNMYAGELIFILIAGLLPW, and AIFHILIITLQAFIFMVLTIV.

Belongs to the ATPase A chain family. F-type ATPases have 2 components, CF(1) - the catalytic core - and CF(0) - the membrane proton channel. CF(1) has five subunits: alpha(3), beta(3), gamma(1), delta(1), epsilon(1). CF(0) has three main subunits: a(1), b(2) and c(9-12). The alpha and beta chains form an alternating ring which encloses part of the gamma chain. CF(1) is attached to CF(0) by a central stalk formed by the gamma and epsilon chains, while a peripheral stalk is formed by the delta and b chains.

Its subcellular location is the cell inner membrane. Functionally, key component of the proton channel; it plays a direct role in the translocation of protons across the membrane. This Edwardsiella ictaluri (strain 93-146) protein is ATP synthase subunit a.